We begin with the raw amino-acid sequence, 244 residues long: 2-C-methyl-D-erythritol 4-phosphate cytidylyltransferase (244 aa).

It belongs to the IspD/TarI cytidylyltransferase family. IspD subfamily.

It catalyses the reaction 2-C-methyl-D-erythritol 4-phosphate + CTP + H(+) = 4-CDP-2-C-methyl-D-erythritol + diphosphate. Its pathway is isoprenoid biosynthesis; isopentenyl diphosphate biosynthesis via DXP pathway; isopentenyl diphosphate from 1-deoxy-D-xylulose 5-phosphate: step 2/6. Functionally, catalyzes the formation of 4-diphosphocytidyl-2-C-methyl-D-erythritol from CTP and 2-C-methyl-D-erythritol 4-phosphate (MEP). This is 2-C-methyl-D-erythritol 4-phosphate cytidylyltransferase from Prosthecochloris aestuarii (strain DSM 271 / SK 413).